A 454-amino-acid chain; its full sequence is Bifunctional protein GlmU (454 aa).

Positions 1–225 are pyrophosphorylase; that stretch reads MNIVILAAGM…LWETLGVNSK (225 aa). UDP-N-acetyl-alpha-D-glucosamine-binding positions include 6 to 9, Lys-20, Gln-71, 76 to 77, 98 to 100, Gly-135, Glu-150, Asn-165, and Asn-223; these read LAAG, GT, and YGD. Asp-100 contributes to the Mg(2+) binding site. Asn-223 contacts Mg(2+). The interval 226–246 is linker; it reads VQLAEVERIHQRNLAQRLLET. Residues 247–454 form an N-acetyltransferase region; that stretch reads GVTLADPARI…WQRPVKKAKQ (208 aa). UDP-N-acetyl-alpha-D-glucosamine-binding residues include Arg-329 and Lys-347. The active-site Proton acceptor is the His-359. UDP-N-acetyl-alpha-D-glucosamine is bound by residues Tyr-362 and Asn-373. Acetyl-CoA contacts are provided by residues Ala-376, 382 to 383, Ser-401, Ala-419, and Arg-436; that span reads NY.

It in the N-terminal section; belongs to the N-acetylglucosamine-1-phosphate uridyltransferase family. In the C-terminal section; belongs to the transferase hexapeptide repeat family. In terms of assembly, homotrimer. Requires Mg(2+) as cofactor.

Its subcellular location is the cytoplasm. It catalyses the reaction alpha-D-glucosamine 1-phosphate + acetyl-CoA = N-acetyl-alpha-D-glucosamine 1-phosphate + CoA + H(+). The catalysed reaction is N-acetyl-alpha-D-glucosamine 1-phosphate + UTP + H(+) = UDP-N-acetyl-alpha-D-glucosamine + diphosphate. It participates in nucleotide-sugar biosynthesis; UDP-N-acetyl-alpha-D-glucosamine biosynthesis; N-acetyl-alpha-D-glucosamine 1-phosphate from alpha-D-glucosamine 6-phosphate (route II): step 2/2. The protein operates within nucleotide-sugar biosynthesis; UDP-N-acetyl-alpha-D-glucosamine biosynthesis; UDP-N-acetyl-alpha-D-glucosamine from N-acetyl-alpha-D-glucosamine 1-phosphate: step 1/1. Its pathway is bacterial outer membrane biogenesis; LPS lipid A biosynthesis. Its function is as follows. Catalyzes the last two sequential reactions in the de novo biosynthetic pathway for UDP-N-acetylglucosamine (UDP-GlcNAc). The C-terminal domain catalyzes the transfer of acetyl group from acetyl coenzyme A to glucosamine-1-phosphate (GlcN-1-P) to produce N-acetylglucosamine-1-phosphate (GlcNAc-1-P), which is converted into UDP-GlcNAc by the transfer of uridine 5-monophosphate (from uridine 5-triphosphate), a reaction catalyzed by the N-terminal domain. This Cupriavidus pinatubonensis (strain JMP 134 / LMG 1197) (Cupriavidus necator (strain JMP 134)) protein is Bifunctional protein GlmU.